A 151-amino-acid chain; its full sequence is Transcriptional repressor NrdR (151 aa).

A zinc finger spans residues 3-34 (CPFCGYSESKVVDSRSTEDNMAIRRRRECLEC). Positions 49 to 139 (ILVIKKDSSR…VYRQFKDINT (91 aa)) constitute an ATP-cone domain.

The protein belongs to the NrdR family. The cofactor is Zn(2+).

Its function is as follows. Negatively regulates transcription of bacterial ribonucleotide reductase nrd genes and operons by binding to NrdR-boxes. This is Transcriptional repressor NrdR from Clostridium acetobutylicum (strain ATCC 824 / DSM 792 / JCM 1419 / IAM 19013 / LMG 5710 / NBRC 13948 / NRRL B-527 / VKM B-1787 / 2291 / W).